Reading from the N-terminus, the 307-residue chain is Protein YIF1A (307 aa).

The disordered stretch occupies residues 1 to 42 (MNFQQQGYRATKPRARASPPTGGPMLFDDTSSGPPPMNNQNY). Topologically, residues 1–148 (MNFQQQGYRA…TPRHDVNAPD (148 aa)) are cytoplasmic. Residues 149–169 (LYIPTMAFITYILLAGMALGI) form a helical membrane-spanning segment. At 170 to 184 (QKRFSPEVLGLCAST) the chain is on the lumenal side. Residues 185–205 (ALVWMIIEVLVMLLSLYLLTV) form a helical membrane-spanning segment. Residues 206 to 213 (HTDLSTFD) are Cytoplasmic-facing. The helical transmembrane segment at 214 to 236 (LVAYSGYKYVGMILTVFCGLLFG) threads the bilayer. At 237 to 239 (SDG) the chain is on the lumenal side. A helical membrane pass occupies residues 240–259 (YYVALAWSSCALMFFIVRSL). Residues 260–285 (KMKILSSISADSMGAGASAKPRFRLY) lie on the Cytoplasmic side of the membrane. Residues 286 to 306 (ITVASAAFQPFIIYWLTAHLV) form a helical membrane-spanning segment.

The protein belongs to the YIF1 family.

Its subcellular location is the endoplasmic reticulum membrane. It is found in the golgi apparatus membrane. The protein localises to the endoplasmic reticulum-Golgi intermediate compartment membrane. Functionally, possible role in transport between endoplasmic reticulum and Golgi. This Danio rerio (Zebrafish) protein is Protein YIF1A (yif1a).